Reading from the N-terminus, the 64-residue chain is Large ribosomal subunit protein bL35c (64 aa).

This sequence belongs to the bacterial ribosomal protein bL35 family.

The protein localises to the plastid. Its subcellular location is the chloroplast. This Cyanidium caldarium (Red alga) protein is Large ribosomal subunit protein bL35c.